The primary structure comprises 561 residues: Lengsin (561 aa).

Disordered regions lie at residues 1–78 (MNDE…WHNA) and 91–112 (SLPS…TRDN). Residues 26–37 (NKLKRTRRKVTK) are compositionally biased toward basic residues. Positions 50-63 (MANSREMSRNQTAD) are enriched in polar residues. The region spanning 135–229 (NHLQFVRFEA…VICDTFTVTG (95 aa)) is the GS beta-grasp domain. Residues 236–561 (PRYIAKRQLR…EGNKFLEYFI (326 aa)) form the GS catalytic domain.

It belongs to the glutamine synthetase family. In terms of assembly, dodecamer. Interacts with BFSP2 and VIM. Expressed in lens.

In terms of biological role, may act as a component of the cytoskeleton or as a chaperone for the reorganization of intermediate filament proteins during terminal differentiation in the lens. Does not seem to have enzymatic activity. The sequence is that of Lengsin (Lgsn) from Rattus norvegicus (Rat).